A 308-amino-acid polypeptide reads, in one-letter code: Glutaminase (308 aa).

7 residues coordinate substrate: serine 65, asparagine 116, glutamate 161, asparagine 168, tyrosine 192, tyrosine 244, and valine 262.

Belongs to the glutaminase family. As to quaternary structure, homotetramer.

It catalyses the reaction L-glutamine + H2O = L-glutamate + NH4(+). This is Glutaminase from Geobacillus kaustophilus (strain HTA426).